A 43-amino-acid polypeptide reads, in one-letter code: Defensin-A (43 aa).

3 disulfide bridges follow: C3–C34, C20–C39, and C24–C41.

It localises to the secreted. Antibacterial protein. Strong activity against the Gram-positive bacteria M.luteus, B.megaterium and S.aureus. Reduced activity against Gram-positive bacterium B.subtilis and weak activity against Gram-negative bacterium X.japonicus. No detectable activity against the Gram-negative bacteria E.asbriae, E.coli, P.aeruginosa and S.marcescens. This Anomala cuprea (Cupreous chafer beetle) protein is Defensin-A.